The sequence spans 390 residues: Succinate--CoA ligase [ADP-forming] subunit beta (390 aa).

The ATP-grasp domain occupies 9-248; sequence KDILRKFGVT…TSEEDPFEVE (240 aa). Residues Lys-50, 57-59, Glu-103, Met-106, and Glu-111 each bind ATP; that span reads GRG. Mg(2+) is bound by residues Asn-203 and Asp-217. Substrate-binding positions include Asn-268 and 325–327; that span reads GIV.

Belongs to the succinate/malate CoA ligase beta subunit family. As to quaternary structure, heterotetramer of two alpha and two beta subunits. Mg(2+) serves as cofactor.

It carries out the reaction succinate + ATP + CoA = succinyl-CoA + ADP + phosphate. The catalysed reaction is GTP + succinate + CoA = succinyl-CoA + GDP + phosphate. The protein operates within carbohydrate metabolism; tricarboxylic acid cycle; succinate from succinyl-CoA (ligase route): step 1/1. Its function is as follows. Succinyl-CoA synthetase functions in the citric acid cycle (TCA), coupling the hydrolysis of succinyl-CoA to the synthesis of either ATP or GTP and thus represents the only step of substrate-level phosphorylation in the TCA. The beta subunit provides nucleotide specificity of the enzyme and binds the substrate succinate, while the binding sites for coenzyme A and phosphate are found in the alpha subunit. This Chlorobium chlorochromatii (strain CaD3) protein is Succinate--CoA ligase [ADP-forming] subunit beta.